Consider the following 193-residue polypeptide: Xanthine phosphoribosyltransferase (193 aa).

Positions 20 and 27 each coordinate xanthine. 128–132 (ANGQA) contacts 5-phospho-alpha-D-ribose 1-diphosphate. Lys156 lines the xanthine pocket.

This sequence belongs to the purine/pyrimidine phosphoribosyltransferase family. Xpt subfamily. In terms of assembly, homodimer.

Its subcellular location is the cytoplasm. It carries out the reaction XMP + diphosphate = xanthine + 5-phospho-alpha-D-ribose 1-diphosphate. Its pathway is purine metabolism; XMP biosynthesis via salvage pathway; XMP from xanthine: step 1/1. Functionally, converts the preformed base xanthine, a product of nucleic acid breakdown, to xanthosine 5'-monophosphate (XMP), so it can be reused for RNA or DNA synthesis. The polypeptide is Xanthine phosphoribosyltransferase (Streptococcus pyogenes serotype M3 (strain ATCC BAA-595 / MGAS315)).